A 1194-amino-acid chain; its full sequence is DNA polymerase catalytic subunit (1194 aa).

This sequence belongs to the DNA polymerase type-B family. Forms a complex with the ssDNA-binding protein, the DNA polymerase processivity factor, and the alkaline exonuclease. Interacts with the helicase-primase complex composed of the primase, the helicase and the primase-associated factor; this interaction may coordinate leading and lagging strand DNA synthesis at the replication fork.

It localises to the host nucleus. It catalyses the reaction DNA(n) + a 2'-deoxyribonucleoside 5'-triphosphate = DNA(n+1) + diphosphate. The catalysed reaction is Endonucleolytic cleavage to 5'-phosphomonoester.. Functionally, replicates viral genomic DNA. The replication complex is composed of six viral proteins: the DNA polymerase, processivity factor, primase, primase-associated factor, helicase, and ssDNA-binding protein. Additionally, the polymerase contains an intrinsic ribonuclease H (RNase H) activity that specifically degrades RNA/DNA heteroduplexes or duplex DNA substrates in the 5' to 3' direction. Therefore, it can catalyze the excision of the RNA primers that initiate the synthesis of Okazaki fragments at a replication fork during viral DNA replication. The chain is DNA polymerase catalytic subunit from Varicella-zoster virus (strain Oka vaccine) (HHV-3).